The chain runs to 187 residues: UPF0301 protein ETA_28320 (187 aa).

Belongs to the UPF0301 (AlgH) family.

This chain is UPF0301 protein ETA_28320, found in Erwinia tasmaniensis (strain DSM 17950 / CFBP 7177 / CIP 109463 / NCPPB 4357 / Et1/99).